The primary structure comprises 420 residues: MDKLLIRGRKPLDGEIRISGAKNAALPILAATLLADEPVTVGNLPHLNDITTMIELLGRMGVELLIDEKMSVEVHANTIKHFHAPYELVKTMRASILVLGPLVAHFGEAEVSLPGGCAIGTRPVNLHIHGLEMMGADIKVENGYIKAKTNGRLKGAHIFLDTVTVTGTENLMMAAALAEGKTILENAAREPEVVDLAECLIAMGADIKGHGTATIEINGVERLHGCHYNVLPDRIETGTYLVAAAATGGRVKVKDTREDILEAVLLKLEEAGAHITTGPDWIELDMKGKRPKAVSLRTAPYPAFPTDMQAQFAAMNAVAEGSGTIVETVFENRFMHLQELIRMGADITLEGNAAIIKGVEHLTGAPVMATDLRASASLVIAGLMADGDTIVDRIYHIDRGYECIEEKLQLLGASIRRLPA.

22–23 (KN) is a binding site for phosphoenolpyruvate. A UDP-N-acetyl-alpha-D-glucosamine-binding site is contributed by arginine 93. Residue cysteine 117 is the Proton donor of the active site. At cysteine 117 the chain carries 2-(S-cysteinyl)pyruvic acid O-phosphothioketal. Aspartate 307 and valine 329 together coordinate UDP-N-acetyl-alpha-D-glucosamine.

The protein belongs to the EPSP synthase family. MurA subfamily.

The protein resides in the cytoplasm. It carries out the reaction phosphoenolpyruvate + UDP-N-acetyl-alpha-D-glucosamine = UDP-N-acetyl-3-O-(1-carboxyvinyl)-alpha-D-glucosamine + phosphate. The protein operates within cell wall biogenesis; peptidoglycan biosynthesis. Its function is as follows. Cell wall formation. Adds enolpyruvyl to UDP-N-acetylglucosamine. The chain is UDP-N-acetylglucosamine 1-carboxyvinyltransferase from Marinobacter nauticus (strain ATCC 700491 / DSM 11845 / VT8) (Marinobacter aquaeolei).